We begin with the raw amino-acid sequence, 452 residues long: Mitochondrial distribution and morphology protein 10 (452 aa).

Residues 105-130 (PLAPESWDSDGPGHEGSDGQEDETTP) are disordered.

This sequence belongs to the MDM10 family. In terms of assembly, component of the ER-mitochondria encounter structure (ERMES) or MDM complex, composed of MMM1, MDM10, MDM12 and MDM34. Associates with the mitochondrial outer membrane sorting assembly machinery SAM(core) complex.

It localises to the mitochondrion outer membrane. Functionally, component of the ERMES/MDM complex, which serves as a molecular tether to connect the endoplasmic reticulum and mitochondria. Components of this complex are involved in the control of mitochondrial shape and protein biogenesis and may function in phospholipid exchange. MDM10 is involved in the late assembly steps of the general translocase of the mitochondrial outer membrane (TOM complex). Functions in the TOM40-specific route of the assembly of outer membrane beta-barrel proteins, including the association of TOM40 with the receptor TOM22 and small TOM proteins. Can associate with the SAM(core) complex as well as the MDM12-MMM1 complex, both involved in late steps of the major beta-barrel assembly pathway, that is responsible for biogenesis of all outer membrane beta-barrel proteins. May act as a switch that shuttles between both complexes and channels precursor proteins into the TOM40-specific pathway. Plays a role in mitochondrial morphology and in the inheritance of mitochondria. This chain is Mitochondrial distribution and morphology protein 10, found in Uncinocarpus reesii (strain UAMH 1704).